Consider the following 273-residue polypeptide: MALKNFNPITPSLRALVQVDKTSVWKGRPFKSLTKGISKTGGRNNHGRITSWHRGGGHKKLYRIIDFKRNKIDISAVVERIEYDPNRTAFIALIKYEDGQYSYILAPQKLSVGDKVISSQDADIKIGNCLPLKFIPIGTTVHNVEMKVGKGGQIARSAGTSVDLVGKDSGYAQIKLRSGEFRLIPLDCKATIGSISNPDQKNINLGKAGRNRWLGWRPHVRGVAMNPVDHPHGGGEGKTSGGRHPVTPWGFPTKGKKTRKNKRTSKFIVKKRK.

Residues 228–273 are disordered; it reads VDHPHGGGEGKTSGGRHPVTPWGFPTKGKKTRKNKRTSKFIVKKRK. The segment covering 254-273 has biased composition (basic residues); the sequence is KGKKTRKNKRTSKFIVKKRK.

Belongs to the universal ribosomal protein uL2 family. As to quaternary structure, part of the 50S ribosomal subunit. Forms a bridge to the 30S subunit in the 70S ribosome.

One of the primary rRNA binding proteins. Required for association of the 30S and 50S subunits to form the 70S ribosome, for tRNA binding and peptide bond formation. It has been suggested to have peptidyltransferase activity; this is somewhat controversial. Makes several contacts with the 16S rRNA in the 70S ribosome. The chain is Large ribosomal subunit protein uL2 from Rickettsia canadensis (strain McKiel).